The primary structure comprises 126 residues: Small ribosomal subunit protein uS13 (126 aa).

Residues 95–126 are disordered; the sequence is GLPVRGQRTQTNARTRKGKKKTVAGKKKAGRK. Positions 108-126 are enriched in basic residues; that stretch reads RTRKGKKKTVAGKKKAGRK.

Belongs to the universal ribosomal protein uS13 family. In terms of assembly, part of the 30S ribosomal subunit. Forms a loose heterodimer with protein S19. Forms two bridges to the 50S subunit in the 70S ribosome.

In terms of biological role, located at the top of the head of the 30S subunit, it contacts several helices of the 16S rRNA. In the 70S ribosome it contacts the 23S rRNA (bridge B1a) and protein L5 of the 50S subunit (bridge B1b), connecting the 2 subunits; these bridges are implicated in subunit movement. Contacts the tRNAs in the A and P-sites. This chain is Small ribosomal subunit protein uS13, found in Thermobifida fusca (strain YX).